The chain runs to 160 residues: Protein-export protein SecB (160 aa).

This sequence belongs to the SecB family. In terms of assembly, homotetramer, a dimer of dimers. One homotetramer interacts with 1 SecA dimer.

The protein localises to the cytoplasm. One of the proteins required for the normal export of preproteins out of the cell cytoplasm. It is a molecular chaperone that binds to a subset of precursor proteins, maintaining them in a translocation-competent state. It also specifically binds to its receptor SecA. The protein is Protein-export protein SecB of Orientia tsutsugamushi (strain Boryong) (Rickettsia tsutsugamushi).